The sequence spans 294 residues: Autophagy protein 5 (294 aa).

Lys149 is covalently cross-linked (Glycyl lysine isopeptide (Lys-Gly) (interchain with G-Cter in ATG12)).

The protein belongs to the ATG5 family. As to quaternary structure, conjugated with ATG12. The ATG5-ATG12 conjugate forms a complex with several units of ATG16. The ATG12-ATG5 conjugate also associates with ATG3. In terms of processing, conjugated to ATG12; which is essential for autophagy. Conjugation with ATG12 involves ATG7 as an E1-like activating enzyme and ATG10 as an E2-like conjugating enzyme.

The protein localises to the preautophagosomal structure membrane. Functionally, involved in cytoplasm to vacuole transport (Cvt) and autophagic vesicle formation. Autophagy is essential for maintenance of amino acid levels and protein synthesis under nitrogen starvation. Required for selective autophagic degradation of the nucleus (nucleophagy). Also required for mitophagy, which eliminates defective or superfluous mitochondria in order to fulfill cellular energy requirements and prevent excess ROS production. Conjugation with ATG12, through a ubiquitin-like conjugating system involving ATG7 as an E1-like activating enzyme and ATG10 as an E2-like conjugating enzyme, is essential for its function. The ATG12-ATG5 conjugate acts as an E3-like enzyme which is required for lipidation of ATG8 and ATG8 association to the vesicle membranes. ATG12-ATG5 rearranges the ATG3 catalytic center and enhances its E2 activity. Plays a role in the regulation of filamentous growth and chronological longevity. The polypeptide is Autophagy protein 5 (ATG5) (Saccharomyces cerevisiae (strain YJM789) (Baker's yeast)).